The sequence spans 389 residues: Geranylgeranyl pyrophosphate synthase A (389 aa).

Lys-99, Arg-102, and His-131 together coordinate isopentenyl diphosphate. Mg(2+) contacts are provided by Asp-138 and Asp-142. A dimethylallyl diphosphate-binding site is contributed by Arg-147. Arg-148 serves as a coordination point for isopentenyl diphosphate.

This sequence belongs to the FPP/GGPP synthase family. Mg(2+) is required as a cofactor.

The protein resides in the cytoplasm. The enzyme catalyses isopentenyl diphosphate + (2E)-geranyl diphosphate = (2E,6E)-farnesyl diphosphate + diphosphate. It carries out the reaction isopentenyl diphosphate + (2E,6E)-farnesyl diphosphate = (2E,6E,10E)-geranylgeranyl diphosphate + diphosphate. It functions in the pathway isoprenoid biosynthesis; farnesyl diphosphate biosynthesis; farnesyl diphosphate from geranyl diphosphate and isopentenyl diphosphate: step 1/1. Its pathway is isoprenoid biosynthesis; geranylgeranyl diphosphate biosynthesis; geranylgeranyl diphosphate from farnesyl diphosphate and isopentenyl diphosphate: step 1/1. Functionally, catalyzes the trans-addition of the 2 molecules of isopentenyl diphosphate (IPP) onto geranyl diphosphate (GDP) to form geranylgeranyl pyrophosphate (GGDP). Does not catalyze the conversion of dimethylallyl diphosphate (DMAPP). This is Geranylgeranyl pyrophosphate synthase A (GGS-A) from Phomopsis amygdali (Fusicoccum amygdali).